A 434-amino-acid polypeptide reads, in one-letter code: Glutamyl-tRNA reductase 2 (434 aa).

Residues 57-60, Ser113, 118-120, and Gln124 contribute to the substrate site; these read TCNR and DFE. Cys58 acts as the Nucleophile in catalysis. 193-198 is a binding site for NADP(+); sequence GTGKIG.

This sequence belongs to the glutamyl-tRNA reductase family. As to quaternary structure, homodimer.

The catalysed reaction is (S)-4-amino-5-oxopentanoate + tRNA(Glu) + NADP(+) = L-glutamyl-tRNA(Glu) + NADPH + H(+). It functions in the pathway porphyrin-containing compound metabolism; protoporphyrin-IX biosynthesis; 5-aminolevulinate from L-glutamyl-tRNA(Glu): step 1/2. Functionally, catalyzes the NADPH-dependent reduction of glutamyl-tRNA(Glu) to glutamate 1-semialdehyde (GSA). The chain is Glutamyl-tRNA reductase 2 from Flavobacterium johnsoniae (strain ATCC 17061 / DSM 2064 / JCM 8514 / BCRC 14874 / CCUG 350202 / NBRC 14942 / NCIMB 11054 / UW101) (Cytophaga johnsonae).